We begin with the raw amino-acid sequence, 185 residues long: Elongation factor P (185 aa).

This sequence belongs to the elongation factor P family.

It is found in the cytoplasm. It participates in protein biosynthesis; polypeptide chain elongation. Its function is as follows. Involved in peptide bond synthesis. Stimulates efficient translation and peptide-bond synthesis on native or reconstituted 70S ribosomes in vitro. Probably functions indirectly by altering the affinity of the ribosome for aminoacyl-tRNA, thus increasing their reactivity as acceptors for peptidyl transferase. In Thermotoga petrophila (strain ATCC BAA-488 / DSM 13995 / JCM 10881 / RKU-1), this protein is Elongation factor P.